The chain runs to 92 residues: Large ribosomal subunit protein bL31 (92 aa).

It belongs to the bacterial ribosomal protein bL31 family. Type A subfamily. As to quaternary structure, part of the 50S ribosomal subunit.

Functionally, binds the 23S rRNA. This chain is Large ribosomal subunit protein bL31, found in Mesoplasma florum (strain ATCC 33453 / NBRC 100688 / NCTC 11704 / L1) (Acholeplasma florum).